A 209-amino-acid polypeptide reads, in one-letter code: Large ribosomal subunit protein uL3 (209 aa).

Polar residues predominate over residues 112 to 122 (GTTRGHGTQGN). The tract at residues 112 to 146 (GTTRGHGTQGNIKRWGQSRGPETHGSRYHRIPGSM) is disordered.

This sequence belongs to the universal ribosomal protein uL3 family. As to quaternary structure, part of the 50S ribosomal subunit. Forms a cluster with proteins L14 and L19.

One of the primary rRNA binding proteins, it binds directly near the 3'-end of the 23S rRNA, where it nucleates assembly of the 50S subunit. This is Large ribosomal subunit protein uL3 from Lactobacillus gasseri (strain ATCC 33323 / DSM 20243 / BCRC 14619 / CIP 102991 / JCM 1131 / KCTC 3163 / NCIMB 11718 / NCTC 13722 / AM63).